We begin with the raw amino-acid sequence, 590 residues long: (-)-alpha-terpineol synthase (590 aa).

Residues Asp-339, Asp-343, Asp-483, Thr-487, and Glu-491 each coordinate Mg(2+). Positions 339–343 (DDVYD) match the DDXXD motif motif.

It belongs to the terpene synthase family. It depends on Mg(2+) as a cofactor.

The catalysed reaction is (2E)-geranyl diphosphate + H2O = (S)-alpha-terpineol + diphosphate. The protein operates within secondary metabolite biosynthesis; terpenoid biosynthesis. In terms of biological role, mediates the conversion of geranyl diphosphate into alpha-terpineol, a monoterpenol. Monoterpenols contribute to the final grape and wine aroma and flavor. Also forms some 1,8-cineole and traces of other monoterpenoids. The sequence is that of (-)-alpha-terpineol synthase from Vitis vinifera (Grape).